A 111-amino-acid polypeptide reads, in one-letter code: Putative single-stranded DNA-binding protein ycf41 (111 aa).

The 98-residue stretch at 1–98 folds into the SSB domain; the sequence is MNKCNLLVQI…FSTSRIFKYK (98 aa).

It localises to the plastid. It is found in the chloroplast. This chain is Putative single-stranded DNA-binding protein ycf41 (ycf41), found in Porphyra purpurea (Red seaweed).